The primary structure comprises 134 residues: Small ribosomal subunit protein uS9 (134 aa).

Positions 98–114 are enriched in basic and acidic residues; the sequence is SKQELKSHGFLTRDPRK. The interval 98 to 134 is disordered; sequence SKQELKSHGFLTRDPRKKERKKYGHKKARKSFQFSKR. Residues 115 to 134 are compositionally biased toward basic residues; that stretch reads KERKKYGHKKARKSFQFSKR.

Belongs to the universal ribosomal protein uS9 family.

In Chlamydia caviae (strain ATCC VR-813 / DSM 19441 / 03DC25 / GPIC) (Chlamydophila caviae), this protein is Small ribosomal subunit protein uS9.